Reading from the N-terminus, the 246-residue chain is Aspartate/glutamate leucyltransferase (246 aa).

It belongs to the R-transferase family. Bpt subfamily.

The protein resides in the cytoplasm. It carries out the reaction N-terminal L-glutamyl-[protein] + L-leucyl-tRNA(Leu) = N-terminal L-leucyl-L-glutamyl-[protein] + tRNA(Leu) + H(+). The catalysed reaction is N-terminal L-aspartyl-[protein] + L-leucyl-tRNA(Leu) = N-terminal L-leucyl-L-aspartyl-[protein] + tRNA(Leu) + H(+). Functions in the N-end rule pathway of protein degradation where it conjugates Leu from its aminoacyl-tRNA to the N-termini of proteins containing an N-terminal aspartate or glutamate. The polypeptide is Aspartate/glutamate leucyltransferase (Rhodospirillum rubrum (strain ATCC 11170 / ATH 1.1.1 / DSM 467 / LMG 4362 / NCIMB 8255 / S1)).